We begin with the raw amino-acid sequence, 328 residues long: Malate dehydrogenase (328 aa).

11–17 contributes to the NAD(+) binding site; that stretch reads GAAGQIG. Substrate contacts are provided by Arg-94 and Arg-100. Residues Asn-107, Gln-114, and 131–133 contribute to the NAD(+) site; that span reads VGN. Substrate contacts are provided by Asn-133 and Arg-164. His-189 functions as the Proton acceptor in the catalytic mechanism.

This sequence belongs to the LDH/MDH superfamily. MDH type 2 family.

It carries out the reaction (S)-malate + NAD(+) = oxaloacetate + NADH + H(+). In terms of biological role, catalyzes the reversible oxidation of malate to oxaloacetate. The protein is Malate dehydrogenase of Xylella fastidiosa (strain Temecula1 / ATCC 700964).